The sequence spans 365 residues: 5-hydroxytryptamine receptor 1E (365 aa).

Topologically, residues 1–21 are extracellular; sequence MNITNCTTEASMAIRPKTITE. Asn2 and Asn5 each carry an N-linked (GlcNAc...) asparagine glycan. Residues 22 to 45 form a helical membrane-spanning segment; it reads KMLICMTLVVITTLTTLLNLAVIM. Residues 46 to 59 lie on the Cytoplasmic side of the membrane; it reads AIGTTKKLHQPANY. Residues 60-84 form a helical membrane-spanning segment; sequence LICSLAVTDLLVAVLVMPLSIIYIV. Over 85 to 92 the chain is Extracellular; that stretch reads MDRWKLGY. A helical transmembrane segment spans residues 93-118; that stretch reads FLCEVWLSVDMTCCTCSILHLCVIAL. A disulfide bridge links Cys95 with Cys173. Residues Asp102 and Cys106 each contribute to the serotonin site. The DRY motif; important for ligand-induced conformation changes motif lies at 119–121; the sequence is DRY. Topologically, residues 119 to 138 are cytoplasmic; it reads DRYWAITNAIEYARKRTAKR. Residues 139-157 form a helical membrane-spanning segment; the sequence is AALMILTVWTISIFISMPP. Over 158-179 the chain is Extracellular; the sequence is LFWRSHRRLSPPPSQCTIQHDH. The chain crosses the membrane as a helical span at residues 180 to 203; it reads VIYTIYSTLGAFYIPLTLILILYY. Topologically, residues 204–291 are cytoplasmic; the sequence is RIYHAAKSLY…SSTRERKAAR (88 aa). Residues 292 to 316 traverse the membrane as a helical segment; it reads ILGLILGAFILSWLPFFIKELIVGL. The Extracellular portion of the chain corresponds to 317-322; that stretch reads SIYTVS. The helical transmembrane segment at 323–345 threads the bilayer; sequence SEVADFLTWLGYVNSLINPLLYT. An NPxxY motif; important for ligand-induced conformation changes and signaling motif is present at residues 340-344; it reads NPLLY. At 346–365 the chain is on the cytoplasmic side; that stretch reads SFNEDFKLAFKKLIRCREHT.

The protein belongs to the G-protein coupled receptor 1 family. As to expression, detected in brain.

The protein localises to the cell membrane. G-protein coupled receptor for 5-hydroxytryptamine (serotonin). Also functions as a receptor for various alkaloids and psychoactive substances. Ligand binding causes a conformation change that triggers signaling via guanine nucleotide-binding proteins (G proteins) and modulates the activity of downstream effectors, such as adenylate cyclase. HTR1E is coupled to G(i)/G(o) G alpha proteins and mediates inhibitory neurotransmission by inhibiting adenylate cyclase activity. The polypeptide is 5-hydroxytryptamine receptor 1E (Homo sapiens (Human)).